The primary structure comprises 339 residues: DNA-directed RNA polymerase subunit alpha (339 aa).

The segment at 1–233 (MVREEVAGST…DLFLPFLHAE (233 aa)) is alpha N-terminal domain (alpha-NTD). The tract at residues 266–339 (GIPLNCIFID…IDLLKNKLSF (74 aa)) is alpha C-terminal domain (alpha-CTD).

The protein belongs to the RNA polymerase alpha chain family. In terms of assembly, in plastids the minimal PEP RNA polymerase catalytic core is composed of four subunits: alpha, beta, beta', and beta''. When a (nuclear-encoded) sigma factor is associated with the core the holoenzyme is formed, which can initiate transcription.

The protein resides in the plastid. Its subcellular location is the chloroplast. It catalyses the reaction RNA(n) + a ribonucleoside 5'-triphosphate = RNA(n+1) + diphosphate. Functionally, DNA-dependent RNA polymerase catalyzes the transcription of DNA into RNA using the four ribonucleoside triphosphates as substrates. This chain is DNA-directed RNA polymerase subunit alpha, found in Aegilops speltoides (Goatgrass).